A 143-amino-acid chain; its full sequence is Large ribosomal subunit protein uL15 (143 aa).

Positions 1 to 56 (MELNSIKPAEGSKHAKRRVGRGIGSGLGKTAGRGHKGQKSRSGGYHKVGFEGGQMP) are disordered. A compositionally biased stretch (gly residues) spans 21–31 (RGIGSGLGKTA).

This sequence belongs to the universal ribosomal protein uL15 family. In terms of assembly, part of the 50S ribosomal subunit.

Its function is as follows. Binds to the 23S rRNA. The chain is Large ribosomal subunit protein uL15 from Delftia acidovorans (strain DSM 14801 / SPH-1).